Reading from the N-terminus, the 552-residue chain is MEDPKSLSAPLTAFNADTTTADETPAAQKKYEDDNGQKAGSESSENTKNSDHGDATEVNTPKSADLEANALRNSSVSRSNQEQEKSEEAIDPNIVDWDGPNDPSNPLNWPTWKIKTHIFLVSSITFISPLGSSILATGIPQILAEFRSTNAELGSLVVSVYLLGFAAGPLVIAPLSELYGRMPLYHICNILFAILTVGCALGPTLNSEIGLRFLQGCAGSAPLAIGGGTISDLIPQERRGKYMGIYALGPTLGPIFGPVAGGFLTGAKGWRWLMWLLLMIEGSVTLVNFVVMRETYGVVIMARKTRALQKQTGNMSLRSRYDQGLTTRRLWRNTLIRPAKMLVYSPIIFLLSLFMAMVYGYLYLLFTTFPVVFGEYYHFSIGITGLVYLGLGIGNIIGLVIFGVFSDKILLAKAASGELKPEYRLLPMVWTSFTVPIGLFIYGWSARYAVHWIVPIIGTVFFGIGLLVTLVCTLTYIVDAFTEYAASATAANAVMRSVVGATLPLAGPSMYQALGIGWGNSLLAFIALAGCPIPWVFYVYGERIRKSSKATY.

Residues 1 to 102 (MEDPKSLSAP…NIVDWDGPND (102 aa)) form a disordered region. The segment covering 16-27 (ADTTTADETPAA) has biased composition (low complexity). Composition is skewed to polar residues over residues 38 to 47 (KAGSESSENT) and 71 to 80 (LRNSSVSRSN). N-linked (GlcNAc...) asparagine glycosylation occurs at Asn-73. The next 6 helical transmembrane spans lie at 118–138 (IFLVSSITFISPLGSSILATG), 153–173 (LGSLVVSVYLLGFAAGPLVIA), 182–202 (MPLYHICNILFAILTVGCALG), 214–234 (LQGCAGSAPLAIGGGTISDLI), 244–264 (GIYALGPTLGPIFGPVAGGFL), and 272–292 (WLMWLLLMIEGSVTLVNFVVM). Asn-314 carries N-linked (GlcNAc...) asparagine glycosylation. 6 helical membrane passes run 346-366 (PIIFLLSLFMAMVYGYLYLLF), 385-405 (GLVYLGLGIGNIIGLVIFGVF), 425-445 (LLPMVWTSFTVPIGLFIYGWS), 452-472 (WIVPIIGTVFFGIGLLVTLVC), 498-518 (VVGATLPLAGPSMYQALGIGW), and 521-541 (SLLAFIALAGCPIPWVFYVYG).

It belongs to the major facilitator superfamily.

The protein resides in the cell membrane. Functionally, MFS-type transporter; part of the gene cluster that mediates the biosynthesis of atranorin, a depside of polyketide origin that accumulates in the cortical or medullary layers of lichen thalli. The sequence is that of MFS-type transporter atr4 from Stereocaulon alpinum (Alpine snow lichen).